Reading from the N-terminus, the 59-residue chain is Zinc finger protein HVO_2753 (59 aa).

4 short sequence motifs (c(P)XCG motif) span residues 12–16 (CVSCG), 29–33 (CPDCG), 39–43 (CSKCR), and 51–55 (CPDCG). Zn(2+) is bound by residues Cys29 and Cys32. Residues Cys51 and Cys54 each contribute to the Zn(2+) site.

Monomer in solution.

Its function is as follows. Zinc-binding protein that binds only one zinc ion. Is required for swarming and biofilm formation. The polypeptide is Zinc finger protein HVO_2753 (Haloferax volcanii (strain ATCC 29605 / DSM 3757 / JCM 8879 / NBRC 14742 / NCIMB 2012 / VKM B-1768 / DS2) (Halobacterium volcanii)).